A 393-amino-acid chain; its full sequence is Pigment production hydroxylase (393 aa).

Functionally, involved in pigment production acting as a hydroxylase that transforms indole to indoxyl, resulting in the formation of indigo. In Rhodococcus erythropolis (Arthrobacter picolinophilus), this protein is Pigment production hydroxylase.